We begin with the raw amino-acid sequence, 573 residues long: Phosphoenolpyruvate-protein phosphotransferase (573 aa).

The active-site Tele-phosphohistidine intermediate is H190. The substrate site is built by R297 and R333. Residues E432 and D456 each coordinate Mg(2+). Phosphoenolpyruvate is bound at residue N455–D456. R466 is a binding site for substrate. The active-site Proton donor is C503.

The protein belongs to the PEP-utilizing enzyme family. In terms of assembly, homodimer. Mg(2+) serves as cofactor.

Its subcellular location is the cytoplasm. It carries out the reaction L-histidyl-[protein] + phosphoenolpyruvate = N(pros)-phospho-L-histidyl-[protein] + pyruvate. Functionally, general (non sugar-specific) component of the phosphoenolpyruvate-dependent sugar phosphotransferase system (sugar PTS). This major carbohydrate active-transport system catalyzes the phosphorylation of incoming sugar substrates concomitantly with their translocation across the cell membrane. Enzyme I transfers the phosphoryl group from phosphoenolpyruvate (PEP) to the phosphoryl carrier protein (HPr). This is Phosphoenolpyruvate-protein phosphotransferase (ptsI) from Staphylococcus carnosus (strain TM300).